Consider the following 769-residue polypeptide: Endonuclease MutS2 (769 aa).

335-342 (GGNAGGKT) contacts ATP. The Smr domain occupies 694-769 (IDLRGKRADV…GDGMTEVELV (76 aa)).

This sequence belongs to the DNA mismatch repair MutS family. MutS2 subfamily. As to quaternary structure, homodimer. Binds to stalled ribosomes, contacting rRNA.

Endonuclease that is involved in the suppression of homologous recombination and thus may have a key role in the control of bacterial genetic diversity. Its function is as follows. Acts as a ribosome collision sensor, splitting the ribosome into its 2 subunits. Detects stalled/collided 70S ribosomes which it binds and splits by an ATP-hydrolysis driven conformational change. Acts upstream of the ribosome quality control system (RQC), a ribosome-associated complex that mediates the extraction of incompletely synthesized nascent chains from stalled ribosomes and their subsequent degradation. Probably generates substrates for RQC. The polypeptide is Endonuclease MutS2 (Maridesulfovibrio salexigens (strain ATCC 14822 / DSM 2638 / NCIMB 8403 / VKM B-1763) (Desulfovibrio salexigens)).